Reading from the N-terminus, the 334-residue chain is HTH-type transcriptional repressor PurR (334 aa).

An HTH lacI-type domain is found at 2–56 (ATIKDVAKMAGVSTTTVSHVINKTRFVAAETEKLVLQAIQELNYSPSAVARSLKV). The segment at residues 4–23 (IKDVAKMAGVSTTTVSHVIN) is a DNA-binding region (H-T-H motif). Residues 48-56 (SAVARSLKV) mediate DNA binding. Tyrosine 73, lysine 189, threonine 191, phenylalanine 220, and aspartate 274 together coordinate hypoxanthine.

Homodimer.

The protein operates within purine metabolism; purine nucleotide biosynthesis [regulation]. Is the main repressor of the genes involved in the de novo synthesis of purine nucleotides, regulating purB, purC, purEK, purF, purHD, purL, purMN and guaBA expression. PurR is allosterically activated to bind its cognate DNA by binding the purine corepressors, hypoxanthine or guanine, thereby effecting transcription repression. The protein is HTH-type transcriptional repressor PurR of Pasteurella multocida (strain Pm70).